A 465-amino-acid chain; its full sequence is Hydroxyacid-oxoacid transhydrogenase, mitochondrial (465 aa).

This sequence belongs to the iron-containing alcohol dehydrogenase family. Hydroxyacid-oxoacid transhydrogenase subfamily.

The protein localises to the mitochondrion. It catalyses the reaction (S)-3-hydroxybutanoate + 2-oxoglutarate = (R)-2-hydroxyglutarate + acetoacetate. The catalysed reaction is 4-hydroxybutanoate + 2-oxoglutarate = (R)-2-hydroxyglutarate + succinate semialdehyde. Its function is as follows. Catalyzes the cofactor-independent reversible oxidation of gamma-hydroxybutyrate (GHB) to succinic semialdehyde (SSA) coupled to reduction of 2-ketoglutarate (2-KG) to D-2-hydroxyglutarate (D-2-HG). L-3-hydroxybutyrate (L-3-OHB) is also a substrate for HOT when using 2-KG as hydrogen acceptor, resulting in the formation of D-2-HG. This Caenorhabditis elegans protein is Hydroxyacid-oxoacid transhydrogenase, mitochondrial.